We begin with the raw amino-acid sequence, 425 residues long: Tumor necrosis factor receptor superfamily member 16 (425 aa).

The signal sequence occupies residues 1 to 29 (MRRAGAACSAMDRLRLLLLLILGVSSGGA). Over 30-253 (KETCSTGLYT…VTRGTTDNLI (224 aa)) the chain is Extracellular. 4 TNFR-Cys repeats span residues 32 to 65 (TCSTGLYTHSGECCKACNLGEGVAQPCGANQTVC), 67 to 108 (PCLD…DAVC), 109 to 147 (RCAYGYYQDEETGHCEACSVCEVGSGLVFSCQDKQNTVC), and 149 to 189 (ECPE…DAEC). 12 disulfides stabilise this stretch: C33–C44, C45–C58, C48–C65, C68–C84, C87–C100, C90–C108, C110–C123, C126–C139, C129–C147, C150–C165, C168–C181, and C171–C189. N-linked (GlcNAc...) asparagine glycosylation is found at N61 and N71. A disordered region spans residues 193-225 (PGRWIPRSTPPEGSDSTAPSTQEPEVPPEQDLV). Over residues 206 to 215 (SDSTAPSTQE) the composition is skewed to polar residues. Residues 254–274 (PVYCSILAAVVVGLVAYIAFK) form a helical membrane-spanning segment. Over 275–425 (RWNSCKQNKQ…CSESTATSPV (151 aa)) the chain is Cytoplasmic. 2 stretches are compositionally biased toward polar residues: residues 282–292 (NKQGANSRPVN) and 306–327 (SGISVDSQSLHDQQTHTQTASG). The tract at residues 282–332 (NKQGANSRPVNQTPPPEGEKLHSDSGISVDSQSLHDQQTHTQTASGQALKG) is disordered. S312 is modified (phosphoserine). The tract at residues 327 to 342 (GQALKGDGNLYSSLPL) is mediates interaction with KIDINS220. The region spanning 354–419 (GDTWRHLAGE…DIVESLCSES (66 aa)) is the Death domain.

Homodimer; disulfide-linked. Heterodimer with SORCS2. The extracellular domains of the heterodimer bind NGF. The cytoplasmic region of the heterodimer binds TRIO. NGF binding mediates dissociation of TRIO from the receptor complex. Interacts with RTN4R. Interacts with TRAF2, TRAF4 and TRAF6. Interacts with PTPN13 and RANBP9. Interacts through TRAF6 with SQSTM1 which bridges NGFR to NTRK1. Interacts with BEX1. Interacts with BEX3. Interacts with KIDINS220 and NTRK1. Can form a ternary complex with NTRK1 and KIDINS220 and this complex is affected by the expression levels of KIDINS220. An increase in KIDINS220 expression leads to a decreased association of NGFR and NTRK1. Interacts (via death domain) with RAB31. Interacts with NTRK2; may regulate the ligand specificity of the NTRK2 receptor. Interacts with LINGO1. Interacts with NRADD. Interacts with MAGED1; the interaction antagonizes the association NGFR:NTRK1. Interacts (via death domain) with ARHGDIA and RIPK2. Interacts with BFAR. In terms of processing, subject to intramembrane proteolytic cleavage by the gamma-secretase complex, giving rise to an intracellular fragment that is rapidly degraded via the proteasome. N- and O-glycosylated. Post-translationally, phosphorylated on serine residues.

It localises to the cell membrane. It is found in the cytoplasm. Its subcellular location is the perikaryon. The protein resides in the cell projection. The protein localises to the growth cone. It localises to the dendritic spine. Low affinity receptor which can bind to NGF, BDNF, NTF3, and NTF4. Forms a heterodimeric receptor with SORCS2 that binds the precursor forms of NGF, BDNF and NTF3 with high affinity, and has much lower affinity for mature NGF and BDNF. In response to proNGF binding, the heterodimeric receptor with SORCS2 activates a signaling cascade that leads to decreased Rac activity, reorganization of the actin cytoskeleton and neuronal growth cone collapse. Plays an important role in differentiation and survival of specific neuronal populations during development. Can mediate cell survival as well as cell death of neural cells. Plays a role in the inactivation of RHOA. Plays a role in the regulation of the translocation of GLUT4 to the cell surface in adipocytes and skeletal muscle cells in response to insulin, probably by regulating RAB31 activity, and thereby contributes to the regulation of insulin-dependent glucose uptake. Necessary for the circadian oscillation of the clock genes BMAL1, PER1, PER2 and NR1D1 in the suprachiasmatic nucleus (SCN) of the brain and in liver and of the genes involved in glucose and lipid metabolism in the liver. This Rattus norvegicus (Rat) protein is Tumor necrosis factor receptor superfamily member 16 (Ngfr).